The following is a 333-amino-acid chain: Serine/threonine-protein phosphatase 4 catalytic subunit 1 (333 aa).

The disordered stretch occupies residues 1–29 (MALAVADTQNETFARSESPTSGPSDQLST). The segment covering 7-27 (DTQNETFARSESPTSGPSDQL) has biased composition (polar residues). Positions 79, 81, 107, and 139 each coordinate Mn(2+). His-140 acts as the Proton donor in catalysis. Mn(2+) is bound by residues His-189 and His-264. A Leucine methyl ester modification is found at Leu-333.

This sequence belongs to the PPP phosphatase family. PP-4 (PP-X) subfamily. In terms of assembly, serine/threonine-protein phosphatase 4 (PP4) occurs in different assemblies of the catalytic and one or more regulatory subunits. The regulatory subunits are likely to be ppfr-1, ppfr-2, ppfr-4 and smk-1. Interacts with mei-1. The cofactor is Mn(2+). Post-translationally, methylation at the C-terminal Leu-333 is critical for interactions with regulatory subunits.

Its subcellular location is the cytoplasm. The protein resides in the cytoskeleton. It localises to the microtubule organizing center. It is found in the centrosome. It catalyses the reaction O-phospho-L-seryl-[protein] + H2O = L-seryl-[protein] + phosphate. The enzyme catalyses O-phospho-L-threonyl-[protein] + H2O = L-threonyl-[protein] + phosphate. Its function is as follows. Protein phosphatase which plays an essential role in meiosis and in early embryonic mitosis. During spermatocyte meiosis and the first embryonic mitosis, regulates centrosome maturation, and thus spindle formation, by recruiting some of the components of the pericentriolar material (PCM). During oocyte meiosis I, regulates meiotic chromosome dynamics including synapsis-independent chromosome pairing, restriction of synapsis to homologous chromosomes, programmed DNA double-strand break initiation and crossover formation resulting in chiasma formation. During oocyte meiosis II and probably together with regulatory subunit ppfr-1, may regulate microtubule severing by dephosphorylating and activating mei-1, a component of the katanin microtubule severing complex. In Caenorhabditis briggsae, this protein is Serine/threonine-protein phosphatase 4 catalytic subunit 1 (pph-4.1).